Here is a 52-residue protein sequence, read N- to C-terminus: UPF0057 membrane protein At1g57550 (52 aa).

The next 2 helical transmembrane spans lie at 4–24 (FLEV…RYGL) and 30–50 (VCLL…IYVL).

It belongs to the UPF0057 (PMP3) family.

The protein localises to the membrane. The sequence is that of UPF0057 membrane protein At1g57550 from Arabidopsis thaliana (Mouse-ear cress).